The sequence spans 495 residues: MRYYEEDANVTDSPNRNAAPKLIPTIKLGSQDNHDMMWNEDFHLTITNMAKKYGAIYALETGKTTLIALNDHNAVREALVNQSDVFNIRADLEILQVAPQKHFLELEAGELWSLHRKTFATAMRDYFRDRWDTMDQWLVTEIDDIEAAWKSQGDQAVFDPNRDISIKLASFLHRVMFDRRFGEFEESVFDEKSLSWLPAGFINSTRYELMPEHNKESYYAHYGDVIEKFASNLNGLDAYVSMNVLKEKECYNKGQYRHLTDFLLNACDDIPNDVKQQVGATEKEIIIGSLTQVAGAGGGVGAFALRWMLLYLASFPEKQKQVHAELDQVIGQNETPQQSHKGDLHYTQAFIAEVLRHCSITSMPASNYAASKDTFIDGYFVAKGTPLIVNNYGMTRDEALWENPDEFIPERFLEADGTFSKKQQAKSFPFGIGQRRCLGELFGKFLINTLFTHLAHRFEFSLPNNEPINLRAISGVFLVPEKVDIKAKSRSLSDS.

A heme-binding site is contributed by Cys-437.

It belongs to the cytochrome P450 family. Requires heme as cofactor.

Its function is as follows. Cytochrome P450 protein involved in the biosynthesis of polybrominated aromatic organic compounds. In the presence of ferredoxin, ferredoxin reductase and NADH, catalyzes the coupling of bromophenols and bromopyrroles, forming various polybrominated biphenyls and hydroxylated polybrominated diphenyl ethers (OH-BDE). Can also mediate the heterocoupling of 3,5-dibromocatechol, forming six different compounds, including polybrominated dibenzo-p-dioxins, which are among the most toxic molecules known to man. This Marinomonas mediterranea (strain ATCC 700492 / JCM 21426 / NBRC 103028 / MMB-1) protein is Polybrominated aromatic compounds synthase.